Reading from the N-terminus, the 126-residue chain is Protein MGF 100-1R (126 aa).

It belongs to the asfivirus MGF 100 family.

In terms of biological role, plays a role in virus cell tropism, and may be required for efficient virus replication in macrophages. The chain is Protein MGF 100-1R from Ornithodoros (relapsing fever ticks).